A 165-amino-acid chain; its full sequence is uncharacterized protein (165 aa).

This is an uncharacterized protein from Escherichia coli (strain K12).